A 429-amino-acid chain; its full sequence is Adenylosuccinate synthetase (429 aa).

GTP is bound by residues 13-19 (GDEGKGK) and 41-43 (GHT). Asp14 (proton acceptor) is an active-site residue. Positions 14 and 41 each coordinate Mg(2+). Residues 14–17 (DEGK), 39–42 (NAGH), Thr130, Arg144, Gln225, Thr240, and Arg304 contribute to the IMP site. Residue His42 is the Proton donor of the active site. Substrate is bound at residue 300-306 (ATTGRAR). GTP is bound by residues Arg306, 332–334 (KLD), and 413–415 (STG).

Belongs to the adenylosuccinate synthetase family. In terms of assembly, homodimer. Requires Mg(2+) as cofactor.

It localises to the cytoplasm. It carries out the reaction IMP + L-aspartate + GTP = N(6)-(1,2-dicarboxyethyl)-AMP + GDP + phosphate + 2 H(+). Its pathway is purine metabolism; AMP biosynthesis via de novo pathway; AMP from IMP: step 1/2. In terms of biological role, plays an important role in the de novo pathway of purine nucleotide biosynthesis. Catalyzes the first committed step in the biosynthesis of AMP from IMP. This is Adenylosuccinate synthetase from Pseudomonas fluorescens (strain SBW25).